The chain runs to 550 residues: Arginine--tRNA ligase (550 aa).

The short motif at 130-140 (ANPTGPIHLGG) is the 'HIGH' region element.

It belongs to the class-I aminoacyl-tRNA synthetase family. Monomer.

It localises to the cytoplasm. It carries out the reaction tRNA(Arg) + L-arginine + ATP = L-arginyl-tRNA(Arg) + AMP + diphosphate. This is Arginine--tRNA ligase from Rhodococcus jostii (strain RHA1).